Here is a 264-residue protein sequence, read N- to C-terminus: 3-methyl-2-oxobutanoate hydroxymethyltransferase (264 aa).

Residues Asp45 and Asp84 each contribute to the Mg(2+) site. Residues Asp45–Ser46, Asp84, and Lys112 contribute to the 3-methyl-2-oxobutanoate site. A Mg(2+)-binding site is contributed by Glu114. Glu181 serves as the catalytic Proton acceptor.

It belongs to the PanB family. In terms of assembly, homodecamer; pentamer of dimers. The cofactor is Mg(2+).

Its subcellular location is the cytoplasm. It carries out the reaction 3-methyl-2-oxobutanoate + (6R)-5,10-methylene-5,6,7,8-tetrahydrofolate + H2O = 2-dehydropantoate + (6S)-5,6,7,8-tetrahydrofolate. It participates in cofactor biosynthesis; (R)-pantothenate biosynthesis; (R)-pantoate from 3-methyl-2-oxobutanoate: step 1/2. In terms of biological role, catalyzes the reversible reaction in which hydroxymethyl group from 5,10-methylenetetrahydrofolate is transferred onto alpha-ketoisovalerate to form ketopantoate. The sequence is that of 3-methyl-2-oxobutanoate hydroxymethyltransferase from Aeromonas hydrophila subsp. hydrophila (strain ATCC 7966 / DSM 30187 / BCRC 13018 / CCUG 14551 / JCM 1027 / KCTC 2358 / NCIMB 9240 / NCTC 8049).